Here is a 118-residue protein sequence, read N- to C-terminus: Large ribosomal subunit protein uL24 (118 aa).

Belongs to the universal ribosomal protein uL24 family. In terms of assembly, part of the 50S ribosomal subunit.

One of two assembly initiator proteins, it binds directly to the 5'-end of the 23S rRNA, where it nucleates assembly of the 50S subunit. Functionally, one of the proteins that surrounds the polypeptide exit tunnel on the outside of the subunit. This Prochlorococcus marinus (strain MIT 9303) protein is Large ribosomal subunit protein uL24.